Consider the following 1375-residue polypeptide: DNA-directed RNA polymerase subunit beta (1375 aa).

The protein belongs to the RNA polymerase beta chain family. In terms of assembly, the RNAP catalytic core consists of 2 alpha, 1 beta, 1 beta' and 1 omega subunit. When a sigma factor is associated with the core the holoenzyme is formed, which can initiate transcription.

It catalyses the reaction RNA(n) + a ribonucleoside 5'-triphosphate = RNA(n+1) + diphosphate. Functionally, DNA-dependent RNA polymerase catalyzes the transcription of DNA into RNA using the four ribonucleoside triphosphates as substrates. The protein is DNA-directed RNA polymerase subunit beta of Methylorubrum populi (strain ATCC BAA-705 / NCIMB 13946 / BJ001) (Methylobacterium populi).